A 281-amino-acid polypeptide reads, in one-letter code: MDFFNKFSQGLAESSTPKSSIYYSEEKDPDTKKDEAIEIGLKSQESYYQRQLREQLARDNMMTASRQPTQPLQPTIHITPQPVPTPTPAPILLPSSTAPVLKPRQQTNTSSDMSNLFDWLSTDTDAPASTLLPALTPSNTVQDIISKFNKDQKMTTPPSTQPSQTLPTTTCTQQSDGSISCTTPTVTPLQPPIVATVCTPTPTGGTVCTTAQQNPNPGAASQQNLDDMTLKDLMSSVEKDMRQLQAETNDLVTNVYDAREYTRRAIDQILQLVKGFERFQK.

Over residues 1–22 the composition is skewed to polar residues; that stretch reads MDFFNKFSQGLAESSTPKSSIY. Disordered regions lie at residues 1-33 and 149-186; these read MDFFNKFSQGLAESSTPKSSIYYSEEKDPDTKK and NKDQKMTTPPSTQPSQTLPTTTCTQQSDGSISCTTPTV. Residues 24-33 are compositionally biased toward basic and acidic residues; the sequence is SEEKDPDTKK. The span at 155-175 shows a compositional bias: low complexity; the sequence is TTPPSTQPSQTLPTTTCTQQS. Residues 176–186 are compositionally biased toward polar residues; the sequence is DGSISCTTPTV.

The protein belongs to the orthopoxvirus OPG130 family. In terms of assembly, interacts with OPG136 and its cleaved form. In terms of processing, its phosphorylation state is regulated by the OPG054 kinase and the OPG106 phosphatase.

It is found in the virion. The protein resides in the host endoplasmic reticulum-Golgi intermediate compartment membrane. Functionally, component of the virion core. Participates in virion assembly. This Cynomys gunnisoni (Gunnison's prairie dog) protein is 39kDa core protein OPG130 (OPG130).